Consider the following 53-residue polypeptide: Natriuretic peptide DNP-2 (53 aa).

Cysteines 7 and 23 form a disulfide. A propeptide spanning residues 39–53 (IIRDLHPDSKQSQAA) is cleaved from the precursor.

Belongs to the natriuretic peptide family. Expressed by the venom gland.

The protein resides in the secreted. In terms of biological role, exhibits vasodilator, natriuretic and diuretic properties in animal models and human tissues. Acts by stimulating cGMP via the natriuretic peptide receptor 1 (NPR1). Is a poor agonist of the atrial natriuretic peptide receptor 2 (NPR2). Is not degraded by neutral endopeptidase (NEP/MME). Binds to atrial natriuretic peptide clearance receptor (NPR-C/NPR3), which may be responsible of the removal of DNP from the circulation. Increases calcium uptake and induces histamine release from rat peritoneal mast cells. Increases calcium-activated potassium (KCa) current in gastric antral circular smooth muscle cells by increasing cGMP production and activating inositol trisphosphate receptors (IP3Rs). In vivo, reduces both systolic and diastolic blood pressure with no effect on heart rate, when intravenously injected in conscious rabbits. The sequence is that of Natriuretic peptide DNP-2 from Dendroaspis angusticeps (Eastern green mamba).